The following is a 281-amino-acid chain: MSVTDGRQAFPAPAKLNLDLRITGRREDGYHNIESIFCLIDLQDTVYLKPRDDGKIILHNPVDGMPQEADLSYRAASLLQKYARTPTGVEIWLDKKIPTGAGLGGGSSDAATVLLVLNRWWQCGLTQRQLIDSGAALGADVPFFIFGKNAFARGIGDRLDEMDIPKQWYVIVKPPVHVSTAKIFTHEGLTRNSASSIMPTFQNLQPFRNDMQAVVFKEYPEVWKAYSELSRYGFALMTGSGACVFTACQDRNSAYNIYRQVSDLYEAYLAEGLSKHPLLSV.

The active site involves Lys-15. 98–108 (PTGAGLGGGSS) is a binding site for ATP. Residue Asp-140 is part of the active site.

The protein belongs to the GHMP kinase family. IspE subfamily.

The enzyme catalyses 4-CDP-2-C-methyl-D-erythritol + ATP = 4-CDP-2-C-methyl-D-erythritol 2-phosphate + ADP + H(+). It participates in isoprenoid biosynthesis; isopentenyl diphosphate biosynthesis via DXP pathway; isopentenyl diphosphate from 1-deoxy-D-xylulose 5-phosphate: step 3/6. Catalyzes the phosphorylation of the position 2 hydroxy group of 4-diphosphocytidyl-2C-methyl-D-erythritol. This Neisseria meningitidis serogroup A / serotype 4A (strain DSM 15465 / Z2491) protein is 4-diphosphocytidyl-2-C-methyl-D-erythritol kinase.